The sequence spans 200 residues: Small ribosomal subunit protein uS4 (200 aa).

In terms of domain architecture, S4 RNA-binding spans 106–170 (RRLQTIVFKK…SPIANELHPI (65 aa)). The disordered stretch occupies residues 178-200 (AERVKEEAEKEAAASEDGGEQDE). Positions 179–190 (ERVKEEAEKEAA) are enriched in basic and acidic residues.

Belongs to the universal ribosomal protein uS4 family. As to quaternary structure, part of the 30S ribosomal subunit. Contacts protein S5. The interaction surface between S4 and S5 is involved in control of translational fidelity.

In terms of biological role, one of the primary rRNA binding proteins, it binds directly to 16S rRNA where it nucleates assembly of the body of the 30S subunit. Its function is as follows. With S5 and S12 plays an important role in translational accuracy. The chain is Small ribosomal subunit protein uS4 from Thermoplasma volcanium (strain ATCC 51530 / DSM 4299 / JCM 9571 / NBRC 15438 / GSS1).